Reading from the N-terminus, the 708-residue chain is Leukotoxin translocation ATP-binding protein LktB (708 aa).

The Peptidase C39 domain occupies 1–126 (MEANHQRNDL…ACYQGQLILV (126 aa)). The 283-residue stretch at 155 to 437 (FLETLIVSIF…LAQLWQDFQQ (283 aa)) folds into the ABC transmembrane type-1 domain. Transmembrane regions (helical) follow at residues 159 to 179 (LIVS…FQVV), 192 to 212 (LNII…LSGL), 270 to 290 (ALTS…MWYY), 296 to 316 (LVIL…SPIL), and 389 to 409 (VMVI…LSIG). In terms of domain architecture, ABC transporter spans 469-704 (ISFKNIRFRY…SNGLYSYLHQ (236 aa)). 503–510 (GRSGSGKS) is an ATP binding site.

This sequence belongs to the ABC transporter superfamily. Protein-1 exporter (TC 3.A.1.109) family. Homodimer.

It localises to the cell inner membrane. The enzyme catalyses ATP + H2O + proteinSide 1 = ADP + phosphate + proteinSide 2.. In terms of biological role, part of the ABC transporter complex LktBD involved in leukotoxin export. Transmembrane domains (TMD) form a pore in the inner membrane and the ATP-binding domain (NBD) is responsible for energy generation. The protein is Leukotoxin translocation ATP-binding protein LktB (lktB) of Mannheimia haemolytica (Pasteurella haemolytica).